Consider the following 415-residue polypeptide: Phosphoglycerate kinase (415 aa).

Residues 27-29 (DIN), Arg44, 67-70 (HQGR), Arg124, and Arg164 each bind substrate. ATP contacts are provided by residues Glu336 and 362–365 (GGHM).

Belongs to the phosphoglycerate kinase family. In terms of assembly, monomer.

The protein resides in the cytoplasm. The enzyme catalyses (2R)-3-phosphoglycerate + ATP = (2R)-3-phospho-glyceroyl phosphate + ADP. Its pathway is carbohydrate degradation; glycolysis; pyruvate from D-glyceraldehyde 3-phosphate: step 2/5. This Sulfurisphaera tokodaii (strain DSM 16993 / JCM 10545 / NBRC 100140 / 7) (Sulfolobus tokodaii) protein is Phosphoglycerate kinase.